The following is a 143-amino-acid chain: MAKKIEAYIKLQVKAGQANPSPPVGPALGQHGVNIMEFCKAFNAQTQGIEPGSPVPVVISVYSDRSFTFAMKTPPASFLLKRAAGIKSGSGRPNTEKVGKVNRAQLEEIATTKMPDLTAADMDAAVRTIAGSARAMGLDVEGV.

Belongs to the universal ribosomal protein uL11 family. Part of the ribosomal stalk of the 50S ribosomal subunit. Interacts with L10 and the large rRNA to form the base of the stalk. L10 forms an elongated spine to which L12 dimers bind in a sequential fashion forming a multimeric L10(L12)X complex. One or more lysine residues are methylated.

Its function is as follows. Forms part of the ribosomal stalk which helps the ribosome interact with GTP-bound translation factors. The polypeptide is Large ribosomal subunit protein uL11 (Teredinibacter turnerae (strain ATCC 39867 / T7901)).